The following is a 386-amino-acid chain: Ferrochelatase (386 aa).

Residues H196 and E277 each coordinate Fe cation.

This sequence belongs to the ferrochelatase family.

The protein resides in the cytoplasm. The enzyme catalyses heme b + 2 H(+) = protoporphyrin IX + Fe(2+). It functions in the pathway porphyrin-containing compound metabolism; protoheme biosynthesis; protoheme from protoporphyrin-IX: step 1/1. Functionally, catalyzes the ferrous insertion into protoporphyrin IX. In Picosynechococcus sp. (strain ATCC 27264 / PCC 7002 / PR-6) (Agmenellum quadruplicatum), this protein is Ferrochelatase.